The following is a 760-amino-acid chain: 5-methyltetrahydropteroyltriglutamate--homocysteine methyltransferase (760 aa).

5-methyltetrahydropteroyltri-L-glutamate-binding positions include 24-27 and Lys-118; that span reads RELK. Residues 437-439 and Glu-490 contribute to the L-homocysteine site; that span reads IGS. L-methionine contacts are provided by residues 437–439 and Glu-490; that span reads IGS. 5-methyltetrahydropteroyltri-L-glutamate is bound by residues 521–522 and Trp-567; that span reads RC. Residue Asp-605 participates in L-homocysteine binding. L-methionine is bound at residue Asp-605. Glu-611 provides a ligand contact to 5-methyltetrahydropteroyltri-L-glutamate. Zn(2+)-binding residues include His-647, Cys-649, and Glu-671. The Proton donor role is filled by His-700. Cys-732 serves as a coordination point for Zn(2+).

Belongs to the vitamin-B12 independent methionine synthase family. Requires Zn(2+) as cofactor.

The enzyme catalyses 5-methyltetrahydropteroyltri-L-glutamate + L-homocysteine = tetrahydropteroyltri-L-glutamate + L-methionine. It functions in the pathway amino-acid biosynthesis; L-methionine biosynthesis via de novo pathway; L-methionine from L-homocysteine (MetE route): step 1/1. Functionally, catalyzes the transfer of a methyl group from 5-methyltetrahydrofolate to homocysteine resulting in methionine formation. This is 5-methyltetrahydropteroyltriglutamate--homocysteine methyltransferase from Mycobacterium leprae (strain TN).